The sequence spans 550 residues: CTP synthase (550 aa).

The amidoligase domain stretch occupies residues methionine 1–leucine 270. A CTP-binding site is contributed by serine 13. Serine 13 lines the UTP pocket. ATP-binding positions include serine 14–isoleucine 19 and aspartate 71. 2 residues coordinate Mg(2+): aspartate 71 and glutamate 144. CTP contacts are provided by residues aspartate 151–glutamate 153, lysine 191–glutamine 196, and lysine 227. UTP-binding positions include lysine 191–glutamine 196 and lysine 227. The Glutamine amidotransferase type-1 domain occupies threonine 295 to arginine 547. Glycine 356 serves as a coordination point for L-glutamine. The active-site Nucleophile; for glutamine hydrolysis is cysteine 383. Residues leucine 384–glutamine 387, glutamate 407, and arginine 473 contribute to the L-glutamine site. Active-site residues include histidine 520 and glutamate 522.

It belongs to the CTP synthase family. Homotetramer.

The enzyme catalyses UTP + L-glutamine + ATP + H2O = CTP + L-glutamate + ADP + phosphate + 2 H(+). It carries out the reaction L-glutamine + H2O = L-glutamate + NH4(+). The catalysed reaction is UTP + NH4(+) + ATP = CTP + ADP + phosphate + 2 H(+). It functions in the pathway pyrimidine metabolism; CTP biosynthesis via de novo pathway; CTP from UDP: step 2/2. With respect to regulation, allosterically activated by GTP, when glutamine is the substrate; GTP has no effect on the reaction when ammonia is the substrate. The allosteric effector GTP functions by stabilizing the protein conformation that binds the tetrahedral intermediate(s) formed during glutamine hydrolysis. Inhibited by the product CTP, via allosteric rather than competitive inhibition. Catalyzes the ATP-dependent amination of UTP to CTP with either L-glutamine or ammonia as the source of nitrogen. Regulates intracellular CTP levels through interactions with the four ribonucleotide triphosphates. In Cupriavidus necator (strain ATCC 17699 / DSM 428 / KCTC 22496 / NCIMB 10442 / H16 / Stanier 337) (Ralstonia eutropha), this protein is CTP synthase.